The sequence spans 154 residues: Putative pre-16S rRNA nuclease (154 aa).

Belongs to the YqgF nuclease family.

The protein localises to the cytoplasm. Could be a nuclease involved in processing of the 5'-end of pre-16S rRNA. The sequence is that of Putative pre-16S rRNA nuclease from Ruegeria pomeroyi (strain ATCC 700808 / DSM 15171 / DSS-3) (Silicibacter pomeroyi).